The primary structure comprises 178 residues: uncharacterized protein (178 aa).

This sequence belongs to the tail fiber family.

This is an uncharacterized protein from Escherichia coli (strain K12).